We begin with the raw amino-acid sequence, 501 residues long: Lysine--tRNA ligase (501 aa).

The Mg(2+) site is built by E402 and E409.

Belongs to the class-II aminoacyl-tRNA synthetase family. Homodimer. It depends on Mg(2+) as a cofactor.

It localises to the cytoplasm. The catalysed reaction is tRNA(Lys) + L-lysine + ATP = L-lysyl-tRNA(Lys) + AMP + diphosphate. This Helicobacter pylori (strain Shi470) protein is Lysine--tRNA ligase.